The following is a 214-amino-acid chain: dITP/XTP pyrophosphatase (214 aa).

16–21 (THNPGK) is a substrate binding site. Positions 48 and 77 each coordinate Mg(2+). Asp-77 functions as the Proton acceptor in the catalytic mechanism. Substrate is bound by residues Ser-78, 163–166 (FGYD), Lys-186, and 198–199 (HR).

Belongs to the HAM1 NTPase family. Homodimer. Requires Mg(2+) as cofactor.

The catalysed reaction is XTP + H2O = XMP + diphosphate + H(+). It catalyses the reaction dITP + H2O = dIMP + diphosphate + H(+). The enzyme catalyses ITP + H2O = IMP + diphosphate + H(+). Pyrophosphatase that catalyzes the hydrolysis of nucleoside triphosphates to their monophosphate derivatives, with a high preference for the non-canonical purine nucleotides XTP (xanthosine triphosphate), dITP (deoxyinosine triphosphate) and ITP. Seems to function as a house-cleaning enzyme that removes non-canonical purine nucleotides from the nucleotide pool, thus preventing their incorporation into DNA/RNA and avoiding chromosomal lesions. This chain is dITP/XTP pyrophosphatase, found in Bradyrhizobium sp. (strain BTAi1 / ATCC BAA-1182).